A 179-amino-acid chain; its full sequence is Large ribosomal subunit protein uL5 (179 aa).

Belongs to the universal ribosomal protein uL5 family. As to quaternary structure, part of the 50S ribosomal subunit; part of the 5S rRNA/L5/L18/L25 subcomplex. Contacts the 5S rRNA and the P site tRNA. Forms a bridge to the 30S subunit in the 70S ribosome.

Its function is as follows. This is one of the proteins that bind and probably mediate the attachment of the 5S RNA into the large ribosomal subunit, where it forms part of the central protuberance. In the 70S ribosome it contacts protein S13 of the 30S subunit (bridge B1b), connecting the 2 subunits; this bridge is implicated in subunit movement. Contacts the P site tRNA; the 5S rRNA and some of its associated proteins might help stabilize positioning of ribosome-bound tRNAs. The sequence is that of Large ribosomal subunit protein uL5 from Vibrio campbellii (strain ATCC BAA-1116).